The sequence spans 411 residues: Coiled-coil domain-containing protein 159 (411 aa).

The interval 84 to 113 (EQAGKSGAWEKEWDSEPQPHEGTPCSSSDV) is disordered. A compositionally biased stretch (basic and acidic residues) spans 91-102 (AWEKEWDSEPQP). The stretch at 269–305 (EELELVREEVTFIYQKLQDQEDEISENLLNIQKMQKT) forms a coiled coil. Positions 372-411 (RASSLRGQKGHQCKSSQCPSWDSDSDWERPFSKSGSYPPA) are disordered. Positions 384-393 (CKSSQCPSWD) are enriched in polar residues.

Interacts with DYNLT2. Interacts with GGNBP1. Interacts with OSBP2. As to expression, expressed in spermatids but undetectable in the spermatozoon (at protein level). Highly expressed in the testis (at protein level).

Functionally, functions during spermatid development; may participate in the centrosome reduction procedure of spermatids and is required for the formation of the connecting piece/sperm head-tail coupling apparatus (HTCA) and the correct and tight attachment of the flagellum to the nuclear envelope. This is Coiled-coil domain-containing protein 159 (Ccdc159) from Mus musculus (Mouse).